A 397-amino-acid chain; its full sequence is Acetate kinase 2 (397 aa).

Mg(2+) is bound at residue N10. ATP is bound at residue K17. R90 contacts substrate. D147 acts as the Proton donor/acceptor in catalysis. ATP-binding positions include 207–211 (HLGNG), 281–283 (DAR), and 329–333 (GIGEN). E385 contributes to the Mg(2+) binding site.

Belongs to the acetokinase family. Homodimer. The cofactor is Mg(2+). Mn(2+) is required as a cofactor.

It localises to the cytoplasm. The enzyme catalyses acetate + ATP = acetyl phosphate + ADP. It participates in metabolic intermediate biosynthesis; acetyl-CoA biosynthesis; acetyl-CoA from acetate: step 1/2. Functionally, catalyzes the formation of acetyl phosphate from acetate and ATP. Can also catalyze the reverse reaction. This is Acetate kinase 2 from Aliivibrio fischeri (strain ATCC 700601 / ES114) (Vibrio fischeri).